A 377-amino-acid polypeptide reads, in one-letter code: D-alanine--D-alanine ligase (377 aa).

Residues 141 to 347 (KRILNQAGIR…YSELIDRLIQ (207 aa)) form the ATP-grasp domain. 171–226 (KEELGDLVFVKPAKQGSSVGIHKVDTEEEYETAMKDAFTYDYKVLVEAGIKNPREI) serves as a coordination point for ATP. Mg(2+) contacts are provided by Asp301, Glu314, and Asn316.

The protein belongs to the D-alanine--D-alanine ligase family. It depends on Mg(2+) as a cofactor. Requires Mn(2+) as cofactor.

The protein localises to the cytoplasm. It catalyses the reaction 2 D-alanine + ATP = D-alanyl-D-alanine + ADP + phosphate + H(+). It participates in cell wall biogenesis; peptidoglycan biosynthesis. In terms of biological role, cell wall formation. This is D-alanine--D-alanine ligase from Limosilactobacillus fermentum (strain NBRC 3956 / LMG 18251) (Lactobacillus fermentum).